A 169-amino-acid chain; its full sequence is Large ribosomal subunit protein uL15 (169 aa).

A disordered region spans residues 20–56 (GRGIGSGKGKTGGRGVKGQKARSGVSIKGFEGGQMPL). The segment covering 21–35 (RGIGSGKGKTGGRGV) has biased composition (gly residues).

This sequence belongs to the universal ribosomal protein uL15 family. As to quaternary structure, part of the 50S ribosomal subunit.

In terms of biological role, binds to the 23S rRNA. The chain is Large ribosomal subunit protein uL15 from Methylorubrum extorquens (strain CM4 / NCIMB 13688) (Methylobacterium extorquens).